A 185-amino-acid polypeptide reads, in one-letter code: Ribosome-recycling factor (185 aa).

The protein belongs to the RRF family.

Its subcellular location is the cytoplasm. Responsible for the release of ribosomes from messenger RNA at the termination of protein biosynthesis. May increase the efficiency of translation by recycling ribosomes from one round of translation to another. The sequence is that of Ribosome-recycling factor from Bacillus cereus (strain ATCC 10987 / NRS 248).